The following is a 450-amino-acid chain: tRNA-2-methylthio-N(6)-dimethylallyladenosine synthase (450 aa).

The MTTase N-terminal domain maps to 17 to 131; that stretch reads KKFFVKTYGC…LNHVLDEVLA (115 aa). Residues Cys-26, Cys-62, Cys-94, Cys-168, Cys-172, and Cys-175 each coordinate [4Fe-4S] cluster. One can recognise a Radical SAM core domain in the interval 154–385; sequence REDQIKAYVS…LQLQDTIYMK (232 aa). The TRAM domain maps to 388–450; sequence QAFLGQTVEV…SHQTLLGDLQ (63 aa).

It belongs to the methylthiotransferase family. MiaB subfamily. As to quaternary structure, monomer. The cofactor is [4Fe-4S] cluster.

Its subcellular location is the cytoplasm. The enzyme catalyses N(6)-dimethylallyladenosine(37) in tRNA + (sulfur carrier)-SH + AH2 + 2 S-adenosyl-L-methionine = 2-methylsulfanyl-N(6)-dimethylallyladenosine(37) in tRNA + (sulfur carrier)-H + 5'-deoxyadenosine + L-methionine + A + S-adenosyl-L-homocysteine + 2 H(+). Catalyzes the methylthiolation of N6-(dimethylallyl)adenosine (i(6)A), leading to the formation of 2-methylthio-N6-(dimethylallyl)adenosine (ms(2)i(6)A) at position 37 in tRNAs that read codons beginning with uridine. This Protochlamydia amoebophila (strain UWE25) protein is tRNA-2-methylthio-N(6)-dimethylallyladenosine synthase.